A 159-amino-acid chain; its full sequence is uncharacterized protein (159 aa).

This is an uncharacterized protein from Aquifex aeolicus (strain VF5).